The chain runs to 82 residues: Exodeoxyribonuclease 7 small subunit (82 aa).

The protein belongs to the XseB family. As to quaternary structure, heterooligomer composed of large and small subunits.

It is found in the cytoplasm. It catalyses the reaction Exonucleolytic cleavage in either 5'- to 3'- or 3'- to 5'-direction to yield nucleoside 5'-phosphates.. In terms of biological role, bidirectionally degrades single-stranded DNA into large acid-insoluble oligonucleotides, which are then degraded further into small acid-soluble oligonucleotides. The polypeptide is Exodeoxyribonuclease 7 small subunit (Sodalis glossinidius (strain morsitans)).